Here is a 777-residue protein sequence, read N- to C-terminus: Zinc finger FYVE domain-containing protein 1 (777 aa).

A required for localization in the lipid droplets region spans residues 416–777; sequence MAHSSFFPDE…FNCNKKPGDL (362 aa). 2 FYVE-type zinc fingers span residues 598 to 659 and 715 to 775; these read NSQI…DARN and DHEI…KKPG. 16 residues coordinate Zn(2+): C604, C607, C620, C623, C628, C631, C651, C654, C721, C724, C737, C740, C745, C748, C767, and C770.

As to quaternary structure, interacts with RAB18 (in GTP-bound form). Interacts with BSCL2 in a RAB18-dependent manner. Interacts with ZW10. In terms of tissue distribution, ubiquitous.

It is found in the golgi apparatus. The protein localises to the golgi stack. It localises to the endoplasmic reticulum. The protein resides in the preautophagosomal structure. Its subcellular location is the lipid droplet. It is found in the mitochondrion. In terms of biological role, plays a role in the formation of lipid droplets (LDs) which are storage organelles at the center of lipid and energy homeostasis. Regulates the morphology, size and distribution of LDs. Mediates the formation of endoplasmic reticulum-lipid droplets (ER-LD) contact sites by forming a complex with RAB18 and ZW10. Binds to phosphatidylinositol 3-phosphate (PtdIns3P) through FYVE-type zinc finger. The chain is Zinc finger FYVE domain-containing protein 1 (Zfyve1) from Mus musculus (Mouse).